We begin with the raw amino-acid sequence, 308 residues long: Testis-specific Y-encoded protein 3 (308 aa).

This sequence belongs to the nucleosome assembly protein (NAP) family.

The protein resides in the cytoplasm. Its subcellular location is the nucleus. In terms of biological role, may be involved in sperm differentiation and proliferation. The protein is Testis-specific Y-encoded protein 3 (TSPY3) of Homo sapiens (Human).